The sequence spans 763 residues: Leucine-rich repeat and WD repeat-containing protein 1 (763 aa).

LRR repeat units follow at residues 22-43 (QIKT…VPLL), 48-69 (RLEK…LRLP), 70-91 (CLKI…EALT), and 92-113 (NLEE…HKVI). The interval 206–372 (LTSSEEEERV…KTTKAKLQVP (167 aa)) is disordered. Serine 270 bears the Phosphoserine mark. Positions 277 to 288 (VLNTPQKTQPVV) are enriched in polar residues. Threonine 280 is subject to Phosphothreonine. At serine 290 the chain carries Phosphoserine. A compositionally biased stretch (polar residues) spans 313-325 (LENVTQKAASQTE). WD repeat units lie at residues 499–539 (VSRR…QDYN), 608–647 (NNYR…ASWN), 653–704 (VPAV…MENF), and 729–763 (LEGP…RESH).

The protein belongs to the LRWD1 family. In terms of assembly, component of the ORC complex.

It is found in the nucleus. The protein localises to the chromosome. Its subcellular location is the centromere. The protein resides in the telomere. It localises to the cytoplasm. It is found in the cytoskeleton. The protein localises to the microtubule organizing center. Its subcellular location is the centrosome. The protein resides in the kinetochore. Required for G1/S transition. Recruits and stabilizes the origin recognition complex (ORC) onto chromatin during G1 to establish pre-replication complex (preRC) and to heterochromatic sites in post-replicated cells. Binds a combination of DNA and histone methylation repressive marks on heterochromatin. Required for silencing of major satellite repeats. May be important ORC2, ORC3 and ORC4 stability. The chain is Leucine-rich repeat and WD repeat-containing protein 1 (lrwd1) from Danio rerio (Zebrafish).